The following is a 668-amino-acid chain: Phosphoglycerate transport system sensor protein PgtB (668 aa).

2 helical membrane passes run Gly20 to Trp40 and Leu342 to Ile362. An HAMP domain is found at Ser364–Arg416. A Histidine kinase domain is found at Thr454–Asp663. His457 is subject to Phosphohistidine; by autocatalysis.

Its subcellular location is the cell inner membrane. The enzyme catalyses ATP + protein L-histidine = ADP + protein N-phospho-L-histidine.. Its function is as follows. Member of the two-component regulatory system PgtB/PgtA that regulates the inducible phosphoglycerate transport system. Activates PgtA by phosphorylation. The polypeptide is Phosphoglycerate transport system sensor protein PgtB (pgtB) (Salmonella typhimurium (strain LT2 / SGSC1412 / ATCC 700720)).